An 848-amino-acid chain; its full sequence is DNA mismatch repair protein MutS (848 aa).

610–617 provides a ligand contact to ATP; that stretch reads GPNMGGKS.

The protein belongs to the DNA mismatch repair MutS family.

Functionally, this protein is involved in the repair of mismatches in DNA. It is possible that it carries out the mismatch recognition step. This protein has a weak ATPase activity. This is DNA mismatch repair protein MutS from Francisella philomiragia subsp. philomiragia (strain ATCC 25017 / CCUG 19701 / FSC 153 / O#319-036).